The following is a 161-amino-acid chain: Cyclic pyranopterin monophosphate synthase (161 aa).

Residues 78–80 (MCH) and 116–117 (ME) each bind substrate. The active site involves Asp-131.

Belongs to the MoaC family. Homohexamer; trimer of dimers.

It catalyses the reaction (8S)-3',8-cyclo-7,8-dihydroguanosine 5'-triphosphate = cyclic pyranopterin phosphate + diphosphate. It functions in the pathway cofactor biosynthesis; molybdopterin biosynthesis. Functionally, catalyzes the conversion of (8S)-3',8-cyclo-7,8-dihydroguanosine 5'-triphosphate to cyclic pyranopterin monophosphate (cPMP). The sequence is that of Cyclic pyranopterin monophosphate synthase from Nitratidesulfovibrio vulgaris (strain ATCC 29579 / DSM 644 / CCUG 34227 / NCIMB 8303 / VKM B-1760 / Hildenborough) (Desulfovibrio vulgaris).